The primary structure comprises 535 residues: uncharacterized protein (535 aa).

6 consecutive transmembrane segments (helical) span residues 55-75 (LITI…IPII), 82-102 (FMPV…IMFV), 115-135 (IICF…ILRH), 143-163 (AFVL…LMLF), 201-221 (STIL…TLIM), and 346-366 (VSGP…NVFA).

It is found in the membrane. This is an uncharacterized protein from Schizosaccharomyces pombe (strain 972 / ATCC 24843) (Fission yeast).